Here is a 342-residue protein sequence, read N- to C-terminus: MEEADLTLPLSQDTFHDLWNNVFLSTENESLPPPEGLLSQNMDFWEDPETMQETKNVPTAPTVPAISNYAGEHGFNLEFNDSGTAKSVTSTYSVKLGKLFCQLAKTTPIGVLVKEEPPQGAVIRATAVYKKTEHVGEVVKRCPHHQSEDLSDNKSHLIRVEGSQLAQYFEDPNTRRHSVTVPYERPQLGSEMTTILLSFMCNSSCMGGMNRRPILTILTLETTEGEVLGRRCFEVRVCACPGRDRKTEEGNLEKSGTKQTKKRKSAPAPDTSTAKKSKSASSGEDEDKEIYTLSIRGRNRYLWFKSLNDGLELMDKTGPKIKQEIPAPSSGKRLLKGGSDSD.

A transcription activation (acidic) region spans residues 1–35 (MEEADLTLPLSQDTFHDLWNNVFLSTENESLPPPE). A DNA-binding region spans residues 68–255 (NYAGEHGFNL…KTEEGNLEKS (188 aa)). The Zn(2+) site is built by Cys142, His145, Cys201, and Cys205. The interval 236 to 243 (RVCACPGR) is interaction with DNA. Over residues 244-256 (DRKTEEGNLEKSG) the composition is skewed to basic and acidic residues. Residues 244 to 287 (DRKTEEGNLEKSGTKQTKKRKSAPAPDTSTAKKSKSASSGEDED) are disordered. Residues 261–278 (KKRKSAPAPDTSTAKKSK) carry the Bipartite nuclear localization signal motif. The segment covering 271 to 282 (TSTAKKSKSASS) has biased composition (low complexity). The segment at 288–317 (KEIYTLSIRGRNRYLWFKSLNDGLELMDKT) is oligomerization. Positions 302 to 313 (LWFKSLNDGLEL) match the Nuclear export signal motif. Residues 318-342 (GPKIKQEIPAPSSGKRLLKGGSDSD) form a disordered region. Positions 319–336 (PKIKQEIPAPSSGKRLLK) are basic (repression of DNA-binding).

Belongs to the p53 family. Binds DNA as a homotetramer. Requires Zn(2+) as cofactor.

It localises to the cytoplasm. The protein localises to the nucleus. Its function is as follows. Multifunctional transcription factor that induces cell cycle arrest, DNA repair or apoptosis upon binding to its target DNA sequence. Acts as a tumor suppressor in many tumor types; induces growth arrest or apoptosis depending on the physiological circumstances and cell type. Negatively regulates cell division by controlling expression of a set of genes required for this process. One of the activated genes is an inhibitor of cyclin-dependent kinases. Apoptosis induction seems to be mediated either by stimulation of BAX and FAS antigen expression, or by repression of Bcl-2 expression. The protein is Cellular tumor antigen p53 (tp53) of Xiphophorus maculatus (Southern platyfish).